The chain runs to 354 residues: MTSVLALETSCDESAAALVWRDADGRFEVSSARIASQVEEHARWGGVVPEIASRRHVEALPGLIQQVLDESDSTLAEVDAIAATVTPGLAGALMVASVTGRTLSALRDRPFLAVHHLEGHLASVHLAEHRPQLPYLVLLVSGGHTELIRVEADGAMERLGRSHDDAAGEAFDKVARLLGLGYPGGPAIQAAAEGGDGRRFKLPKGRISLPEGGFHPYDFSFSGLKTAMLRTVEAQSGPLPTADLAASFEQVVVDVLVERSLRCAMDHGLEELVMVGGVAANRRLRQTLEQRSNAVGVRVSVAPLAYCTDNAAMIGAAALLRWDAGARGCSLRTGVSARWPLAQVDQLYTEQPAF.

H116 and H120 together coordinate Fe cation. Substrate contacts are provided by residues 139–143 (LVSGG), D172, G185, and N281. D309 contributes to the Fe cation binding site.

The protein belongs to the KAE1 / TsaD family. The cofactor is Fe(2+).

The protein localises to the cytoplasm. It catalyses the reaction L-threonylcarbamoyladenylate + adenosine(37) in tRNA = N(6)-L-threonylcarbamoyladenosine(37) in tRNA + AMP + H(+). In terms of biological role, required for the formation of a threonylcarbamoyl group on adenosine at position 37 (t(6)A37) in tRNAs that read codons beginning with adenine. Is involved in the transfer of the threonylcarbamoyl moiety of threonylcarbamoyl-AMP (TC-AMP) to the N6 group of A37, together with TsaE and TsaB. TsaD likely plays a direct catalytic role in this reaction. The protein is tRNA N6-adenosine threonylcarbamoyltransferase of Parasynechococcus marenigrum (strain WH8102).